Here is a 569-residue protein sequence, read N- to C-terminus: uncharacterized protein (569 aa).

Residues 1-22 (MSLLVKAALILKCASMLQGVSA) form the signal peptide. A disordered region spans residues 498 to 541 (RETSILDSTNTTSTNATNTTTTTSSSSTASSSASASSSTSATSG). The segment covering 505–540 (STNTTSTNATNTTTTTSSSSTASSSASASSSTSATS) has biased composition (low complexity).

The protein localises to the secreted. It is found in the cell surface. This is an uncharacterized protein from Schizosaccharomyces pombe (strain 972 / ATCC 24843) (Fission yeast).